A 295-amino-acid polypeptide reads, in one-letter code: Fatty acid desaturase 4-like 1, chloroplastic (295 aa).

The transit peptide at 1–29 (MAVSFQTKNPLRPITNIPRSYGPTRVRVT) directs the protein to the chloroplast. A run of 3 helical transmembrane segments spans residues 72–92 (WVAA…IGGF), 102–122 (LACY…HWAI), and 175–195 (LAIN…CILL).

This sequence belongs to the fatty acid desaturase CarF family.

The protein resides in the plastid. Its subcellular location is the chloroplast membrane. The protein operates within lipid metabolism; fatty acid metabolism. Fatty acid desaturase involved in the production of chloroplast-specific phosphatidylglycerol molecular species. Catalyzes the formation of a trans double bond introduced close to the carboxyl group of palmitic acid, which is specifically esterified to the sn-2 glyceryl carbon of phosphatidylglycerol. The sequence is that of Fatty acid desaturase 4-like 1, chloroplastic (FAD4L1) from Arabidopsis thaliana (Mouse-ear cress).